A 236-amino-acid polypeptide reads, in one-letter code: Small ribosomal subunit protein uS2c (236 aa).

It belongs to the universal ribosomal protein uS2 family.

The protein localises to the plastid. This Cuscuta obtusiflora (Peruvian dodder) protein is Small ribosomal subunit protein uS2c (rps2).